Reading from the N-terminus, the 196-residue chain is Pyridoxal 5'-phosphate synthase subunit PdxT (196 aa).

Position 47-49 (47-49 (GES)) interacts with L-glutamine. Cys-79 functions as the Nucleophile in the catalytic mechanism. Residues Arg-106 and 134–135 (IR) contribute to the L-glutamine site. Residues His-170 and Glu-172 each act as charge relay system in the active site.

It belongs to the glutaminase PdxT/SNO family. In terms of assembly, in the presence of PdxS, forms a dodecamer of heterodimers. Only shows activity in the heterodimer.

The enzyme catalyses aldehydo-D-ribose 5-phosphate + D-glyceraldehyde 3-phosphate + L-glutamine = pyridoxal 5'-phosphate + L-glutamate + phosphate + 3 H2O + H(+). It carries out the reaction L-glutamine + H2O = L-glutamate + NH4(+). Its pathway is cofactor biosynthesis; pyridoxal 5'-phosphate biosynthesis. In terms of biological role, catalyzes the hydrolysis of glutamine to glutamate and ammonia as part of the biosynthesis of pyridoxal 5'-phosphate. The resulting ammonia molecule is channeled to the active site of PdxS. The sequence is that of Pyridoxal 5'-phosphate synthase subunit PdxT from Bacillus licheniformis (strain ATCC 14580 / DSM 13 / JCM 2505 / CCUG 7422 / NBRC 12200 / NCIMB 9375 / NCTC 10341 / NRRL NRS-1264 / Gibson 46).